The sequence spans 578 residues: Vesicular acetylcholine transporter (578 aa).

Over 1–32 (MASFQIPVINLEVREVKDIVWEKIQEPVNQRR) the chain is Cytoplasmic. A helical membrane pass occupies residues 33–53 (LILVIVSIALLLDNMLYMVIV). Residues 54-98 (PIIPDYLREIGSFDDGPTPPPLRDNITGKIIPVHHDHHGQDSATG) are Lumenal, vesicle-facing. Asparagine 78 carries an N-linked (GlcNAc...) asparagine glycan. A helical membrane pass occupies residues 99-119 (ILFASKAIVQLMVNPFSGGLI). Residues 120 to 125 (DKIGYD) lie on the Cytoplasmic side of the membrane. A helical transmembrane segment spans residues 126–146 (LPMMIGLTIMFFSTAVFACGS). Over 147–154 (SYSVLFFA) the chain is Lumenal, vesicle. The helical transmembrane segment at 155–175 (RSLQGAGSAFADTAGLAMIAD) threads the bilayer. The Cytoplasmic portion of the chain corresponds to 176–187 (RFTEENERSQAL). The chain crosses the membrane as a helical span at residues 188-208 (GIALAFISFGCLVAPPFGGAL). Over 209–215 (YQFAGKE) the chain is Lumenal, vesicle. A helical transmembrane segment spans residues 216–236 (VPFLILALVCLLDGLMLLLVM). Over 237 to 263 (KPVKEAMKQSKDVQDQVIPIWRLLMDP) the chain is Cytoplasmic. A helical membrane pass occupies residues 264–284 (YIAVCAGALTMSNVALAFLEP). Over 285 to 299 (TISLWMEDNMTTDNW) the chain is Lumenal, vesicle. N-linked (GlcNAc...) asparagine glycosylation occurs at asparagine 293. Residues 300-320 (KIGMVWLPAFFPHVLGVVITV) traverse the membrane as a helical segment. Residues 321–330 (KMARKYPQHQ) are Cytoplasmic-facing. Residues 331 to 351 (WLMAAGGLALEGFSCFIIPFC) form a helical membrane-spanning segment. Residues 352-355 (SGYK) lie on the Lumenal, vesicle side of the membrane. Residues 356–376 (MLMLPICVICFGIALIDTALL) traverse the membrane as a helical segment. Residues 377–387 (PTLGYLVDVRY) lie on the Cytoplasmic side of the membrane. Residues 388–408 (VSVYGSIYAIADISYSIAYAV) traverse the membrane as a helical segment. At 409–413 (GPIIA) the chain is on the lumenal, vesicle side. Residues 414–434 (GGVVEAIGFTALNFLIAFSNL) traverse the membrane as a helical segment. Residues 435 to 578 (AYVPVLRKLR…APANPFRQGF (144 aa)) are Cytoplasmic-facing. Low complexity-rich tracts occupy residues 507-534 (EYQQQQQGYQQGYQQDQGYQPGYQEQGG) and 549-563 (QQQQQQQQQQQQQVQ). Residues 507 to 578 (EYQQQQQGYQ…APANPFRQGF (72 aa)) form a disordered region.

The protein belongs to the major facilitator superfamily. Vesicular transporter family.

The protein resides in the membrane. Functionally, involved in acetylcholine transport into synaptic vesicles. The protein is Vesicular acetylcholine transporter (VAChT) of Drosophila melanogaster (Fruit fly).